The chain runs to 280 residues: MLPVLIFPQFDPVMVHVGPLVIRWYAMAYITALLVGWRLVRHLVRLAPRAATDVQVDDFLTWATLGVVLGGRLGYILFYQPAVYLAHPLAALQVWHGGMSFHGGALGVIVALALFTWRNGLSFLGFSDRVTVVVPMGLGLGRIANFINGELWGRPAPASLPWAMVFPQAGPEPRHPSELYEALLEGLVLFSVMWIVARRPAIRERPGFLAGLFLFGYAVARSICECFREPDAFIGFLPFGTTMGQILCIPMAIAGVGLMAQAMMRPARPVLMPALPADSP.

The next 2 membrane-spanning stretches (helical) occupy residues 59-79 and 97-117; these read FLTWATLGVVLGGRLGYILFY and GGMSFHGGALGVIVALALFTW. R142 contributes to the a 1,2-diacyl-sn-glycero-3-phospho-(1'-sn-glycerol) binding site. 2 helical membrane-spanning segments follow: residues 207-227 and 233-253; these read GFLAGLFLFGYAVARSICECF and FIGFLPFGTTMGQILCIPMAI.

Belongs to the Lgt family.

It localises to the cell inner membrane. The catalysed reaction is L-cysteinyl-[prolipoprotein] + a 1,2-diacyl-sn-glycero-3-phospho-(1'-sn-glycerol) = an S-1,2-diacyl-sn-glyceryl-L-cysteinyl-[prolipoprotein] + sn-glycerol 1-phosphate + H(+). It participates in protein modification; lipoprotein biosynthesis (diacylglyceryl transfer). Catalyzes the transfer of the diacylglyceryl group from phosphatidylglycerol to the sulfhydryl group of the N-terminal cysteine of a prolipoprotein, the first step in the formation of mature lipoproteins. In Gluconacetobacter diazotrophicus (strain ATCC 49037 / DSM 5601 / CCUG 37298 / CIP 103539 / LMG 7603 / PAl5), this protein is Phosphatidylglycerol--prolipoprotein diacylglyceryl transferase.